Consider the following 92-residue polypeptide: Small ribosomal subunit protein bS16 (92 aa).

It belongs to the bacterial ribosomal protein bS16 family.

The polypeptide is Small ribosomal subunit protein bS16 (Staphylococcus carnosus (strain TM300)).